A 344-amino-acid chain; its full sequence is Probable electron transfer flavoprotein subunit alpha, mitochondrial (344 aa).

An FAD-binding site is contributed by leucine 284–aspartate 312.

The protein belongs to the ETF alpha-subunit/FixB family. As to quaternary structure, heterodimer of an alpha and a beta subunit. Requires FAD as cofactor.

Its subcellular location is the mitochondrion matrix. Its function is as follows. The electron transfer flavoprotein serves as a specific electron acceptor for several dehydrogenases, including five acyl-CoA dehydrogenases, glutaryl-CoA and sarcosine dehydrogenase. It transfers the electrons to the main mitochondrial respiratory chain via ETF-ubiquinone oxidoreductase (ETF dehydrogenase). This is Probable electron transfer flavoprotein subunit alpha, mitochondrial (AIM45) from Saccharomyces cerevisiae (strain ATCC 204508 / S288c) (Baker's yeast).